Consider the following 207-residue polypeptide: Phosphatidylinositol phosphate synthase (207 aa).

2 consecutive transmembrane segments (helical) span residues 21 to 44 (LRAHVTPDVVTWIGTIGAVLMALI) and 50 to 67 (WLWQGPWLVTLFIFSDSL). An a CDP-1,2-diacyl-sn-glycerol-binding site is contributed by 28-31 (DVVT). The Mg(2+) site is built by D65 and D68. Residues G69, R73, and S79 each coordinate a CDP-1,2-diacyl-sn-glycerol. 2 residues coordinate Mg(2+): D86 and D90. 4 helical membrane passes run 88–106 (TLDRFGDAAIFTGVALYFA), 112–131 (VLWTAMACAALVFGMATSYV), 152–170 (RLLVSLVAIEITGLARVGA), and 176–195 (VVALPIALCYLTLAGAITVV). Residue D90 is the Proton acceptor of the active site.

It belongs to the CDP-alcohol phosphatidyltransferase class-I family. Homodimer. It depends on Mg(2+) as a cofactor.

It localises to the cell membrane. The catalysed reaction is a CDP-1,2-diacyl-sn-glycerol + 1D-myo-inositol 3-phosphate = a 1,2-diacyl-sn-glycero-3-phospho-(1D-myo-inositol-3-phosphate) + CMP + H(+). The enzyme catalyses 1,2-di-(9Z-octadecenoyl)-sn-glycero-3-cytidine-5'-diphosphate + 1D-myo-inositol 3-phosphate = 1,2-di-(9Z-octadecenoyl)-sn-glycero-3-phospho-(1D-myo-inositol-3-phosphate) + CMP + H(+). Its pathway is phospholipid metabolism; phosphatidylinositol phosphate biosynthesis. In terms of biological role, catalyzes the conjugation of the 1'-hydroxyl group of D-myo-inositol-3-phosphate (also named L-myo-inositol-1-phosphate) with a lipid tail of cytidine diphosphate diacylglycerol (CDP-DAG), forming phosphatidylinositol phosphate (PIP) and CMP. PIP is a precursor of phosphatidylinositol (PI) which is an essential lipid required for cell wall formation. The protein is Phosphatidylinositol phosphate synthase of Cutibacterium acnes (strain DSM 16379 / KPA171202) (Propionibacterium acnes).